Consider the following 322-residue polypeptide: DNA repair and recombination protein RadA (322 aa).

105-112 provides a ligand contact to ATP; it reads GMYGSGKT.

It belongs to the eukaryotic RecA-like protein family.

Involved in DNA repair and in homologous recombination. Binds and assemble on single-stranded DNA to form a nucleoprotein filament. Hydrolyzes ATP in a ssDNA-dependent manner and promotes DNA strand exchange between homologous DNA molecules. The sequence is that of DNA repair and recombination protein RadA from Methanococcus maripaludis (strain C6 / ATCC BAA-1332).